A 150-amino-acid polypeptide reads, in one-letter code: uncharacterized protein (150 aa).

This is an uncharacterized protein from Aquifex aeolicus (strain VF5).